Reading from the N-terminus, the 208-residue chain is Large ribosomal subunit protein uL3 (208 aa).

It belongs to the universal ribosomal protein uL3 family. As to quaternary structure, part of the 50S ribosomal subunit. Forms a cluster with proteins L14 and L19.

Functionally, one of the primary rRNA binding proteins, it binds directly near the 3'-end of the 23S rRNA, where it nucleates assembly of the 50S subunit. The protein is Large ribosomal subunit protein uL3 of Desulfosudis oleivorans (strain DSM 6200 / JCM 39069 / Hxd3) (Desulfococcus oleovorans).